Reading from the N-terminus, the 354-residue chain is uncharacterized protein (354 aa).

This sequence belongs to the asfivirus B354L family.

This is an uncharacterized protein from African swine fever virus (isolate Tick/South Africa/Pretoriuskop Pr4/1996) (ASFV).